The chain runs to 419 residues: GTPase Obg (419 aa).

The Obg domain maps to 1–158; that stretch reads MHFVDEAFNE…FKIKTELKVL (158 aa). An OBG-type G domain is found at 159 to 324; that stretch reads ADIGLLGFPS…LKYKMSSFLQ (166 aa). Residues 165 to 172, 190 to 194, 211 to 214, 278 to 281, and 305 to 307 each bind GTP; these read GFPSVGKS, FTTIK, DLPG, NKMD, and SLV. Mg(2+) contacts are provided by S172 and T192. The region spanning 342-419 is the OCT domain; sequence TLTDNLKTIS…KICDRLFDFL (78 aa).

This sequence belongs to the TRAFAC class OBG-HflX-like GTPase superfamily. OBG GTPase family. As to quaternary structure, monomer. Mg(2+) serves as cofactor.

The protein resides in the cytoplasm. Its function is as follows. An essential GTPase which binds GTP, GDP and possibly (p)ppGpp with moderate affinity, with high nucleotide exchange rates and a fairly low GTP hydrolysis rate. Plays a role in control of the cell cycle, stress response, ribosome biogenesis and in those bacteria that undergo differentiation, in morphogenesis control. This is GTPase Obg from Aster yellows witches'-broom phytoplasma (strain AYWB).